The sequence spans 335 residues: Mesoderm-specific transcript homolog protein (335 aa).

2 helical membrane passes run 13 to 33 (WWVQ…HIPP) and 63 to 83 (VGVV…TSSY). Residues 71–310 (IVVLLHGFPT…PRSTVSILDD (240 aa)) enclose the AB hydrolase-1 domain. An RVIALD motif is present at residues 98-103 (RVIALD). Residue asparagine 163 is glycosylated (N-linked (GlcNAc...) asparagine). The helical transmembrane segment at 266-286 (VGALASVTIPIHFIYGPLDPV) threads the bilayer.

Belongs to the AB hydrolase superfamily. In terms of tissue distribution, highly expressed in hydatidiform moles, but barely expressed in dermoid cysts. Biallelic expression is detected in blood lymphocytes. Seems to imprinted in an isoform-specific manner rather than in a tissue-specific manner in lymphocytes. Isoform 1 is expressed only from the paternal allele. Isoform 2 is expressed from both the paternal allele and the maternal allele.

It is found in the endoplasmic reticulum membrane. In Homo sapiens (Human), this protein is Mesoderm-specific transcript homolog protein (MEST).